The primary structure comprises 274 residues: 4-diphosphocytidyl-2-C-methyl-D-erythritol kinase (274 aa).

Lys10 is a catalytic residue. 101–111 contributes to the ATP binding site; that stretch reads PTQAGLGGGSA. The active site involves Asp143.

The protein belongs to the GHMP kinase family. IspE subfamily.

It carries out the reaction 4-CDP-2-C-methyl-D-erythritol + ATP = 4-CDP-2-C-methyl-D-erythritol 2-phosphate + ADP + H(+). The protein operates within isoprenoid biosynthesis; isopentenyl diphosphate biosynthesis via DXP pathway; isopentenyl diphosphate from 1-deoxy-D-xylulose 5-phosphate: step 3/6. Functionally, catalyzes the phosphorylation of the position 2 hydroxy group of 4-diphosphocytidyl-2C-methyl-D-erythritol. The protein is 4-diphosphocytidyl-2-C-methyl-D-erythritol kinase of Helicobacter pylori (strain HPAG1).